The following is a 177-amino-acid chain: Large ribosomal subunit protein uL6 (177 aa).

It belongs to the universal ribosomal protein uL6 family. As to quaternary structure, part of the 50S ribosomal subunit.

In terms of biological role, this protein binds to the 23S rRNA, and is important in its secondary structure. It is located near the subunit interface in the base of the L7/L12 stalk, and near the tRNA binding site of the peptidyltransferase center. This is Large ribosomal subunit protein uL6 from Rhodospirillum rubrum (strain ATCC 11170 / ATH 1.1.1 / DSM 467 / LMG 4362 / NCIMB 8255 / S1).